The chain runs to 236 residues: MGGDAFTFELFGLTFNWTNLISGTIVFVITFFLLFGLSRHLQMKPTGGQNVLEWIVEFTNGIVRGQMPSETSGFYSFFVFVLFVFLFISNQLGLIIQFGWNGHEIVKSPTADPVVTMTLALCAVTLSHFAGVARQGVKGYFADYFKPFSLMFPIKLVEEFSNFLTLGLRIFGNIYAGELLLKLLAGMAFSHGIPTMIVSLPLEIIWQGFSVFIGAIQAYVFVTLTTVYISRKVTGE.

Helical transmembrane passes span 17–37 (WTNL…LFGL), 76–96 (SFFV…GLII), 113–133 (PVVT…AGVA), 170–190 (IFGN…MAFS), and 196–216 (MIVS…IGAI).

This sequence belongs to the ATPase A chain family. F-type ATPases have 2 components, CF(1) - the catalytic core - and CF(0) - the membrane proton channel. CF(1) has five subunits: alpha(3), beta(3), gamma(1), delta(1), epsilon(1). CF(0) has three main subunits: a(1), b(2) and c(9-12). The alpha and beta chains form an alternating ring which encloses part of the gamma chain. CF(1) is attached to CF(0) by a central stalk formed by the gamma and epsilon chains, while a peripheral stalk is formed by the delta and b chains.

It localises to the cell membrane. In terms of biological role, key component of the proton channel; it plays a direct role in the translocation of protons across the membrane. The protein is ATP synthase subunit a of Limosilactobacillus fermentum (strain NBRC 3956 / LMG 18251) (Lactobacillus fermentum).